Consider the following 513-residue polypeptide: ATP synthase subunit alpha (513 aa).

169–176 (GDRQIGKT) provides a ligand contact to ATP.

It belongs to the ATPase alpha/beta chains family. In terms of assembly, F-type ATPases have 2 components, CF(1) - the catalytic core - and CF(0) - the membrane proton channel. CF(1) has five subunits: alpha(3), beta(3), gamma(1), delta(1), epsilon(1). CF(0) has three main subunits: a(1), b(2) and c(9-12). The alpha and beta chains form an alternating ring which encloses part of the gamma chain. CF(1) is attached to CF(0) by a central stalk formed by the gamma and epsilon chains, while a peripheral stalk is formed by the delta and b chains.

The protein resides in the cell inner membrane. It catalyses the reaction ATP + H2O + 4 H(+)(in) = ADP + phosphate + 5 H(+)(out). Functionally, produces ATP from ADP in the presence of a proton gradient across the membrane. The alpha chain is a regulatory subunit. In Shewanella halifaxensis (strain HAW-EB4), this protein is ATP synthase subunit alpha.